Reading from the N-terminus, the 673-residue chain is DNA ligase (673 aa).

NAD(+)-binding positions include 36-40, 85-86, and E116; these read DAEYD and SL. K118 (N6-AMP-lysine intermediate) is an active-site residue. R139, E176, K291, and K315 together coordinate NAD(+). Residues C409, C412, C427, and C433 each coordinate Zn(2+). Positions 592–673 constitute a BRCT domain; the sequence is RGEQPLAGRT…LQALLQEHGR (82 aa).

Belongs to the NAD-dependent DNA ligase family. LigA subfamily. The cofactor is Mg(2+). It depends on Mn(2+) as a cofactor.

The enzyme catalyses NAD(+) + (deoxyribonucleotide)n-3'-hydroxyl + 5'-phospho-(deoxyribonucleotide)m = (deoxyribonucleotide)n+m + AMP + beta-nicotinamide D-nucleotide.. Functionally, DNA ligase that catalyzes the formation of phosphodiester linkages between 5'-phosphoryl and 3'-hydroxyl groups in double-stranded DNA using NAD as a coenzyme and as the energy source for the reaction. It is essential for DNA replication and repair of damaged DNA. This is DNA ligase from Alkalilimnicola ehrlichii (strain ATCC BAA-1101 / DSM 17681 / MLHE-1).